Consider the following 141-residue polypeptide: Histone H2B (141 aa).

Basic and acidic residues predominate over residues 1–10; it reads MAPKAAEKKP. The disordered stretch occupies residues 1–49; sequence MAPKAAEKKPSTGGKAPAGGKAPAEKKEAGKKTAAAASGDKKKRGKTRK. 2 positions are modified to N6-acetyllysine; alternate: K8 and K9. Residues K8 and K9 each participate in a glycyl lysine isopeptide (Lys-Gly) (interchain with G-Cter in SUMO); alternate cross-link. Over residues 11-22 the composition is skewed to low complexity; the sequence is STGGKAPAGGKA. Residue K15 is modified to N6-acetyllysine. K26 bears the N6-acetyllysine; alternate mark. K26 is covalently cross-linked (Glycyl lysine isopeptide (Lys-Gly) (interchain with G-Cter in SUMO); alternate). A Glycyl lysine isopeptide (Lys-Gly) (interchain with G-Cter in SUMO) cross-link involves residue K27. K135 participates in a covalent cross-link: Glycyl lysine isopeptide (Lys-Gly) (interchain with G-Cter in ubiquitin).

It belongs to the histone H2B family. As to quaternary structure, the nucleosome is a histone octamer containing two molecules each of H2A, H2B, H3 and H4 assembled in one H3-H4 heterotetramer and two H2A-H2B heterodimers. The octamer wraps approximately 147 bp of DNA. Post-translationally, monoubiquitinated by the ubc2-bre1 complex to form H2BK123ub1. H2BK123ub1 gives a specific tag for epigenetic transcriptional activation and is also prerequisite for H3K4me and H3K79me formation. H2BK123ub1 also modulates the formation of double-strand breaks during meiosis and is a prerequisite for DNA-damage checkpoint activation. In terms of processing, acetylated by gcn5 to form H2BK11ac and H2BK16ac. H2BK16ac can also be formed by esa1. Acetylation of N-terminal lysines and particularly formation of H2BK11acK16ac has a positive effect on transcription. Sumoylation to form H2BK6su or H2BK7su, and probably also H2BK16su or H2BK17su, occurs preferentially near the telomeres and represses gene transcription.

Its subcellular location is the nucleus. It localises to the chromosome. Functionally, core component of nucleosome. Nucleosomes wrap and compact DNA into chromatin, limiting DNA accessibility to the cellular machineries which require DNA as a template. Histones thereby play a central role in transcription regulation, DNA repair, DNA replication and chromosomal stability. DNA accessibility is regulated via a complex set of post-translational modifications of histones, also called histone code, and nucleosome remodeling. This Aspergillus oryzae (strain ATCC 42149 / RIB 40) (Yellow koji mold) protein is Histone H2B (htb1).